We begin with the raw amino-acid sequence, 93 residues long: MALFHVRMDVAIPRDLDPKVRDETIAKEKAYSQELQRSGKWPEIWRIVGQYSNISIFDVESADELHEILWNLPLFPYMNIEIMPLTKHGSDVK.

The protein belongs to the muconolactone Delta-isomerase family. Homodecamer.

The catalysed reaction is (S)-muconolactone = (4,5-dihydro-5-oxofuran-2-yl)-acetate. Its pathway is aromatic compound metabolism; beta-ketoadipate pathway; 5-oxo-4,5-dihydro-2-furylacetate from catechol: step 3/3. The chain is Muconolactone Delta-isomerase (catC) from Rhodococcus opacus (Nocardia opaca).